The chain runs to 286 residues: Spermidine/putrescine transport system permease protein PotB (286 aa).

Residues 1-13 (MKIINNKFQKITV) lie on the Cytoplasmic side of the membrane. The helical transmembrane segment at 14–33 (AIIFSWLIFFVLIPNLLVLA) threads the bilayer. The Periplasmic portion of the chain corresponds to 34–71 (VSFLTRDGSNFYAFPITIENYTNLFNPLYAQVVWNSLS). Residues 66-274 (VWNSLSMSGI…MALLIFVYYR (209 aa)) form the ABC transmembrane type-1 domain. Residues 72-91 (MSGIATIICLLIGYPFAFMM) traverse the membrane as a helical segment. At 92-100 (SKIHPKYRP) the chain is on the cytoplasmic side. Residues 101–120 (LLLFLVVLPFWTNSLIRIYG) traverse the membrane as a helical segment. Over 121–151 (MKVFLGVKGILNTMLIDMGILSAPIRILNTE) the chain is Periplasmic. Residues 152 to 171 (IAVIIGLVYLLLPFMILPLY) traverse the membrane as a helical segment. The Cytoplasmic segment spans residues 172 to 199 (SAIEKLDNRLLEAARDLGANTFQRFFRV). A helical transmembrane segment spans residues 200–219 (ILPLTMPGIIAGCLLVLLPA). Over 220–252 (MGMFYVADLLGGAKVLLVGNVIKSEFLISRNWP) the chain is Periplasmic. The helical transmembrane segment at 253-272 (FGSAVSIGLTVLMALLIFVY) threads the bilayer. The Cytoplasmic portion of the chain corresponds to 273–286 (YRANKLLNRKVELE).

The protein belongs to the binding-protein-dependent transport system permease family. CysTW subfamily.

Its subcellular location is the cell inner membrane. Required for the activity of the bacterial periplasmic transport system of putrescine and spermidine. This is Spermidine/putrescine transport system permease protein PotB (potB) from Haemophilus influenzae (strain ATCC 51907 / DSM 11121 / KW20 / Rd).